The following is a 270-amino-acid chain: Large ribosomal subunit protein uL2c (270 aa).

Residues 221–245 (NPIDHPHGGGEGRAPIGRNQPKTPW) are disordered.

It belongs to the universal ribosomal protein uL2 family. In terms of assembly, part of the 50S ribosomal subunit.

The protein resides in the plastid. The protein is Large ribosomal subunit protein uL2c (rpl2) of Cuscuta gronovii (Common dodder).